The chain runs to 161 residues: 6,7-dimethyl-8-ribityllumazine synthase (161 aa).

5-amino-6-(D-ribitylamino)uracil-binding positions include W25, 57–59 (AFE), and 80–82 (VVI). 85–86 (GT) serves as a coordination point for (2S)-2-hydroxy-3-oxobutyl phosphate. The Proton donor role is filled by H88. Residue F113 participates in 5-amino-6-(D-ribitylamino)uracil binding. R127 is a binding site for (2S)-2-hydroxy-3-oxobutyl phosphate.

This sequence belongs to the DMRL synthase family.

The catalysed reaction is (2S)-2-hydroxy-3-oxobutyl phosphate + 5-amino-6-(D-ribitylamino)uracil = 6,7-dimethyl-8-(1-D-ribityl)lumazine + phosphate + 2 H2O + H(+). It functions in the pathway cofactor biosynthesis; riboflavin biosynthesis; riboflavin from 2-hydroxy-3-oxobutyl phosphate and 5-amino-6-(D-ribitylamino)uracil: step 1/2. Catalyzes the formation of 6,7-dimethyl-8-ribityllumazine by condensation of 5-amino-6-(D-ribitylamino)uracil with 3,4-dihydroxy-2-butanone 4-phosphate. This is the penultimate step in the biosynthesis of riboflavin. The protein is 6,7-dimethyl-8-ribityllumazine synthase of Kineococcus radiotolerans (strain ATCC BAA-149 / DSM 14245 / SRS30216).